Reading from the N-terminus, the 638-residue chain is Chaperone protein DnaK (638 aa).

Threonine 198 is modified (phosphothreonine; by autocatalysis). The tract at residues tyrosine 598–alanine 638 is disordered. The segment covering serine 601–aspartate 619 has biased composition (basic and acidic residues). The span at valine 620–aspartate 632 shows a compositional bias: acidic residues.

Belongs to the heat shock protein 70 family.

In terms of biological role, acts as a chaperone. In Mesorhizobium japonicum (strain LMG 29417 / CECT 9101 / MAFF 303099) (Mesorhizobium loti (strain MAFF 303099)), this protein is Chaperone protein DnaK.